A 1116-amino-acid polypeptide reads, in one-letter code: Auxin response factor 21 (1116 aa).

Positions 132–234 (FCKTLTASDT…QLLLGIRRAN (103 aa)) form a DNA-binding region, TF-B3. Residues 763-812 (KTDDVPSTSTSPSTNSNPVLLQSIPSSSKNQSLTTAGKTSQSSVVLGPTI) are disordered. The span at 768 to 780 (PSTSTSPSTNSNP) shows a compositional bias: low complexity. Positions 781 to 806 (VLLQSIPSSSKNQSLTTAGKTSQSSV) are enriched in polar residues. The PB1 domain occupies 998–1082 (RTYTKVHKRG…RCIRILSPQE (85 aa)).

It belongs to the ARF family. In terms of assembly, homodimers and heterodimers. As to expression, expressed in roots, culms, leaves and young panicles.

The protein localises to the nucleus. Auxin response factors (ARFs) are transcriptional factors that bind specifically to the DNA sequence 5'-TGTCTC-3' found in the auxin-responsive promoter elements (AuxREs). In Oryza sativa subsp. japonica (Rice), this protein is Auxin response factor 21 (ARF21).